A 197-amino-acid polypeptide reads, in one-letter code: Xanthine phosphoribosyltransferase (197 aa).

Xanthine-binding residues include Leu20 and Asn27. A 5-phospho-alpha-D-ribose 1-diphosphate-binding site is contributed by 128–132 (ANGQA). Residue Lys156 participates in xanthine binding.

This sequence belongs to the purine/pyrimidine phosphoribosyltransferase family. Xpt subfamily. In terms of assembly, homodimer.

Its subcellular location is the cytoplasm. It catalyses the reaction XMP + diphosphate = xanthine + 5-phospho-alpha-D-ribose 1-diphosphate. The protein operates within purine metabolism; XMP biosynthesis via salvage pathway; XMP from xanthine: step 1/1. Functionally, converts the preformed base xanthine, a product of nucleic acid breakdown, to xanthosine 5'-monophosphate (XMP), so it can be reused for RNA or DNA synthesis. The protein is Xanthine phosphoribosyltransferase of Bacillus mycoides (strain KBAB4) (Bacillus weihenstephanensis).